The following is a 624-amino-acid chain: Chaperone protein HtpG (624 aa).

Residues 1–336 (MKGQETRGFQ…SNDLPLNVSR (336 aa)) form an a; substrate-binding region. The b stretch occupies residues 337-552 (EILQDSTVTR…ADEMSTQMAK (216 aa)). The c stretch occupies residues 553 to 624 (LFAAAGQAVP…IRRMNQLLVS (72 aa)).

This sequence belongs to the heat shock protein 90 family. In terms of assembly, homodimer.

It is found in the cytoplasm. In terms of biological role, molecular chaperone. Has ATPase activity. This is Chaperone protein HtpG from Citrobacter koseri (strain ATCC BAA-895 / CDC 4225-83 / SGSC4696).